The primary structure comprises 353 residues: Guanine nucleotide-binding protein subunit alpha (353 aa).

Residues 1 to 26 are disordered; it reads MGCGMSTEEKEGKARNEEIENQLKRD. Gly2 carries the N-myristoyl glycine lipid modification. A lipid anchor (S-palmitoyl cysteine) is attached at Cys3. Over residues 7–26 the composition is skewed to basic and acidic residues; the sequence is TEEKEGKARNEEIENQLKRD. The 322-residue stretch at 32-353 folds into the G-alpha domain; it reads NEIKMLLLGA…QENLRLCGLI (322 aa). A G1 motif region spans residues 35 to 48; it reads KMLLLGAGESGKST. GTP-binding residues include Glu43, Ser44, Gly45, Lys46, Ser47, Thr48, Asp150, Leu175, Thr181, Gly203, Asn269, Lys270, Asp272, and Ala325. Ser47 serves as a coordination point for Mg(2+). The interval 173 to 181 is G2 motif; sequence DVLRSRVKT. Thr181 lines the Mg(2+) pocket. The G3 motif stretch occupies residues 196 to 205; that stretch reads YRMFDVGGQR. The segment at 265–272 is G4 motif; that stretch reads ILFLNKID. Positions 323-328 are G5 motif; sequence TCATDT.

The protein belongs to the G-alpha family. G(q) subfamily. In terms of assembly, g proteins are composed of 3 units; alpha, beta and gamma. The alpha chain contains the guanine nucleotide binding site. Mg(2+) is required as a cofactor.

Guanine nucleotide-binding proteins (G proteins) are involved as modulators or transducers in various transmembrane signaling systems. The chain is Guanine nucleotide-binding protein subunit alpha from Cryphonectria parasitica (Chestnut blight fungus).